The following is a 133-amino-acid chain: Profilin (133 aa).

This sequence belongs to the profilin family.

More likely to influence phosphoinositide metabolism than actin assembly. The protein is Profilin of Camelus.